The following is an 84-amino-acid chain: Large ribosomal subunit protein bL27 (84 aa).

The protein belongs to the bacterial ribosomal protein bL27 family.

The sequence is that of Large ribosomal subunit protein bL27 from Buchnera aphidicola subsp. Schizaphis graminum (strain Sg).